Here is an 843-residue protein sequence, read N- to C-terminus: DNA-directed RNA polymerase subunit beta' (843 aa).

Zn(2+) is bound by residues cysteine 70, cysteine 72, cysteine 85, and cysteine 88. The Mg(2+) site is built by aspartate 686, aspartate 688, and aspartate 690.

It belongs to the RNA polymerase beta' chain family. RpoC1 subfamily. As to quaternary structure, in plastids the minimal PEP RNA polymerase catalytic core is composed of four subunits: alpha, beta, beta', and beta''. When a (nuclear-encoded) sigma factor is associated with the core the holoenzyme is formed, which can initiate transcription. Requires Mg(2+) as cofactor. Zn(2+) serves as cofactor.

The protein resides in the plastid. Its subcellular location is the chloroplast. It catalyses the reaction RNA(n) + a ribonucleoside 5'-triphosphate = RNA(n+1) + diphosphate. In terms of biological role, DNA-dependent RNA polymerase catalyzes the transcription of DNA into RNA using the four ribonucleoside triphosphates as substrates. In Trieres chinensis (Marine centric diatom), this protein is DNA-directed RNA polymerase subunit beta'.